The primary structure comprises 245 residues: Octopine transport system permease protein OccM (245 aa).

Helical transmembrane passes span 12–32 (FVAL…SVAL), 57–77 (FYIF…IYYG), 96–116 (AYWC…AEIM), 163–183 (ILMV…ITGI), and 204–224 (IYLI…WALW). An ABC transmembrane type-1 domain is found at 19–216 (IPLALQLAVF…ILNFIVARLF (198 aa)).

It belongs to the binding-protein-dependent transport system permease family. HisMQ subfamily.

It localises to the cell inner membrane. Its function is as follows. Component of the octopine active transport system probably consisting of four subunits: Q, M, P and T. The chain is Octopine transport system permease protein OccM (occM) from Rhizobium radiobacter (Agrobacterium tumefaciens).